The chain runs to 352 residues: Phosphoribosylformylglycinamidine cyclo-ligase (352 aa).

Belongs to the AIR synthase family.

The protein resides in the cytoplasm. The enzyme catalyses 2-formamido-N(1)-(5-O-phospho-beta-D-ribosyl)acetamidine + ATP = 5-amino-1-(5-phospho-beta-D-ribosyl)imidazole + ADP + phosphate + H(+). The protein operates within purine metabolism; IMP biosynthesis via de novo pathway; 5-amino-1-(5-phospho-D-ribosyl)imidazole from N(2)-formyl-N(1)-(5-phospho-D-ribosyl)glycinamide: step 2/2. The sequence is that of Phosphoribosylformylglycinamidine cyclo-ligase from Stenotrophomonas maltophilia (strain K279a).